A 98-amino-acid polypeptide reads, in one-letter code: HssA/B-like protein 39 (98 aa).

The interval 1–21 is disordered; that stretch reads MTLFSSISSMSTSMSGSKSSI.

This sequence belongs to the hssA/B family.

The sequence is that of HssA/B-like protein 39 (hssl39) from Dictyostelium discoideum (Social amoeba).